The primary structure comprises 546 residues: Arginine--tRNA ligase (546 aa).

Residues 122-132 (ANPTGPFTVGH) carry the 'HIGH' region motif.

It belongs to the class-I aminoacyl-tRNA synthetase family. Monomer.

It is found in the cytoplasm. The catalysed reaction is tRNA(Arg) + L-arginine + ATP = L-arginyl-tRNA(Arg) + AMP + diphosphate. The protein is Arginine--tRNA ligase (argS) of Thermotoga maritima (strain ATCC 43589 / DSM 3109 / JCM 10099 / NBRC 100826 / MSB8).